The sequence spans 231 residues: Flagellar L-ring protein (231 aa).

The signal sequence occupies residues 1–18 (MNRLLSVFALGGAVLLAG). Cys-19 carries N-palmitoyl cysteine lipidation. A lipid anchor (S-diacylglycerol cysteine) is attached at Cys-19.

Belongs to the FlgH family. In terms of assembly, the basal body constitutes a major portion of the flagellar organelle and consists of four rings (L,P,S, and M) mounted on a central rod.

It is found in the cell outer membrane. It localises to the bacterial flagellum basal body. In terms of biological role, assembles around the rod to form the L-ring and probably protects the motor/basal body from shearing forces during rotation. The sequence is that of Flagellar L-ring protein from Pseudomonas putida (strain ATCC 700007 / DSM 6899 / JCM 31910 / BCRC 17059 / LMG 24140 / F1).